Reading from the N-terminus, the 144-residue chain is INO80 complex subunit 5 (144 aa).

Residues 1–58 are disordered; sequence MAAQKKQGERVLPARSTRKRRQLPDMLYYDERTDSYVTPQERSLSEANAQTRPAPNTI. Positions 35-58 are enriched in polar residues; the sequence is SYVTPQERSLSEANAQTRPAPNTI.

As to quaternary structure, component of the INO80 chromatin remodeling complex.

The protein localises to the nucleus. Functionally, component of the INO80 complex which remodels chromatin by shifting nucleosomes and is involved in DNA repair. This chain is INO80 complex subunit 5 (iec5), found in Schizosaccharomyces pombe (strain 972 / ATCC 24843) (Fission yeast).